A 357-amino-acid polypeptide reads, in one-letter code: Thymidine kinase (357 aa).

17 to 24 is a binding site for ATP; sequence GAHGLGKT. Glu45 acts as the Proton acceptor in catalysis. Arg186 serves as a coordination point for ATP. Arg192 is a substrate binding site.

It belongs to the herpesviridae thymidine kinase family. Homodimer.

It carries out the reaction thymidine + ATP = dTMP + ADP + H(+). Its function is as follows. Catalyzes the transfer of the gamma-phospho group of ATP to thymidine to generate dTMP in the salvage pathway of pyrimidine synthesis. The dTMP serves as a substrate for DNA polymerase during viral DNA replication. Allows the virus to be reactivated and to grow in non-proliferative cells lacking a high concentration of phosphorylated nucleic acid precursors. The polypeptide is Thymidine kinase (Bovine herpesvirus 1 (strain 6660) (BoHV-1)).